We begin with the raw amino-acid sequence, 402 residues long: uncharacterized protein (402 aa).

At 1-12 the chain is on the cytoplasmic side; that stretch reads MFQQLSASIRHN. A helical membrane pass occupies residues 13–33; that stretch reads AHIIFLCISWYFISSLASQVT. Residues 34–50 are Extracellular-facing; it reads KQVLTVCPLPLFLGEFQ. A helical transmembrane segment spans residues 51–71; it reads FIYTAVLAWFTCYIAYSFPGF. Over 72–103 the chain is Cytoplasmic; it reads YRIFPNGTFPEYYIDDRETSRAARKESKLSSL. Residues 104-124 form a helical membrane-spanning segment; sequence IIPPSKPILQTVLPLGLFQFV. The Extracellular portion of the chain corresponds to 125–134; sequence GKYFGHTATS. A helical membrane pass occupies residues 135–155; it reads LVPVSTVASIKTLSPMFILLL. At 156–165 the chain is on the cytoplasmic side; sequence QKILKISTLK. The helical transmembrane segment at 166–186 threads the bilayer; sequence ITLTLIFSLCTLVLGVWIIVQ. The Extracellular segment spans residues 187-206; sequence EDNRSPASSNELREFSKYGV. A helical transmembrane segment spans residues 207–227; sequence ICAMISMFIFVLQNIYGKTVF. Residues 228 to 271 are Cytoplasmic-facing; the sequence is TYRSQTDESQSNSGFSRQESPLPLYEKLDEKLVAKKKPKSYDKL. Residues 272–292 traverse the membrane as a helical segment; sequence TLMIYISLVGFCLSFGWFITL. At 293–353 the chain is on the extracellular side; it reads EFPVLFRYFF…TYSIANLMKR (61 aa). Residues 354 to 374 traverse the membrane as a helical segment; that stretch reads FAIIAVSWVFIGRRITWLQVF. Residues 375–402 lie on the Cytoplasmic side of the membrane; sequence GLVLNTLGLFLYERCTSQSKIKAKIRPE.

This sequence belongs to the TPT transporter family.

It is found in the membrane. This is an uncharacterized protein from Saccharomyces cerevisiae (strain ATCC 204508 / S288c) (Baker's yeast).